A 503-amino-acid polypeptide reads, in one-letter code: Probable cytosol aminopeptidase (503 aa).

Residues lysine 274 and aspartate 279 each contribute to the Mn(2+) site. Residue lysine 286 is part of the active site. Residues aspartate 297, aspartate 356, and glutamate 358 each coordinate Mn(2+). Arginine 360 is a catalytic residue.

This sequence belongs to the peptidase M17 family. Requires Mn(2+) as cofactor.

Its subcellular location is the cytoplasm. The catalysed reaction is Release of an N-terminal amino acid, Xaa-|-Yaa-, in which Xaa is preferably Leu, but may be other amino acids including Pro although not Arg or Lys, and Yaa may be Pro. Amino acid amides and methyl esters are also readily hydrolyzed, but rates on arylamides are exceedingly low.. The enzyme catalyses Release of an N-terminal amino acid, preferentially leucine, but not glutamic or aspartic acids.. Functionally, presumably involved in the processing and regular turnover of intracellular proteins. Catalyzes the removal of unsubstituted N-terminal amino acids from various peptides. In Burkholderia ambifaria (strain ATCC BAA-244 / DSM 16087 / CCUG 44356 / LMG 19182 / AMMD) (Burkholderia cepacia (strain AMMD)), this protein is Probable cytosol aminopeptidase.